A 150-amino-acid polypeptide reads, in one-letter code: Macrodomain Ter protein (150 aa).

The protein belongs to the MatP family. As to quaternary structure, homodimer.

The protein localises to the cytoplasm. Functionally, required for spatial organization of the terminus region of the chromosome (Ter macrodomain) during the cell cycle. Prevents early segregation of duplicated Ter macrodomains during cell division. Binds specifically to matS, which is a 13 bp signature motif repeated within the Ter macrodomain. This Salmonella arizonae (strain ATCC BAA-731 / CDC346-86 / RSK2980) protein is Macrodomain Ter protein.